Reading from the N-terminus, the 294-residue chain is 4-hydroxy-tetrahydrodipicolinate synthase (294 aa).

Residue T47 participates in pyruvate binding. Y136 serves as the catalytic Proton donor/acceptor. K164 functions as the Schiff-base intermediate with substrate in the catalytic mechanism. V206 serves as a coordination point for pyruvate.

It belongs to the DapA family. Homotetramer; dimer of dimers.

The protein localises to the cytoplasm. It catalyses the reaction L-aspartate 4-semialdehyde + pyruvate = (2S,4S)-4-hydroxy-2,3,4,5-tetrahydrodipicolinate + H2O + H(+). It participates in amino-acid biosynthesis; L-lysine biosynthesis via DAP pathway; (S)-tetrahydrodipicolinate from L-aspartate: step 3/4. Catalyzes the condensation of (S)-aspartate-beta-semialdehyde [(S)-ASA] and pyruvate to 4-hydroxy-tetrahydrodipicolinate (HTPA). The protein is 4-hydroxy-tetrahydrodipicolinate synthase of Nostoc sp. (strain PCC 7120 / SAG 25.82 / UTEX 2576).